The sequence spans 196 residues: Translation machinery-associated protein 22 (196 aa).

The SUI1 domain maps to 97–168 (VIVKREARTK…EVVAYIHSLL (72 aa)).

It belongs to the DENR family. Interacts with the 40S ribosomal subunit.

It localises to the cytoplasm. This is Translation machinery-associated protein 22 (TMA22) from Candida glabrata (strain ATCC 2001 / BCRC 20586 / JCM 3761 / NBRC 0622 / NRRL Y-65 / CBS 138) (Yeast).